Reading from the N-terminus, the 373-residue chain is DNA replication and repair protein RecF (373 aa).

30–37 provides a ligand contact to ATP; the sequence is GENAQGKT.

It belongs to the RecF family.

It is found in the cytoplasm. In terms of biological role, the RecF protein is involved in DNA metabolism; it is required for DNA replication and normal SOS inducibility. RecF binds preferentially to single-stranded, linear DNA. It also seems to bind ATP. In Limosilactobacillus fermentum (strain NBRC 3956 / LMG 18251) (Lactobacillus fermentum), this protein is DNA replication and repair protein RecF.